A 218-amino-acid chain; its full sequence is MAEETDTRPASAGSRGRPAPEDDDREEGEITDLACAPSPPATHPLEHSWTFWFDNPQSKSKQAAWGSSIRPIHTFSTVEEFWGLYNNINHPSKLIVGADFHCFKNKIEPKWEDPICANGGKWTISCGRGKSDTFWLHTLLAMIGEQFDYGDEICGAVVSVRGKQERIAIWTKNAANEAAQVSIGKQWKELLDYKDSIGFIVHDDAKKMDKGLKNRYTV.

Residues 1–39 (MAEETDTRPASAGSRGRPAPEDDDREEGEITDLACAPSP) form a disordered region. Acidic residues predominate over residues 21–30 (EDDDREEGEI). EIF4G-binding regions lie at residues 43 to 46 (HPLE) and 53 to 89 (FDNP…NNIN). MRNA contacts are provided by residues 61–66 (KQAAWG), K93, and 111–112 (WE). C116 and C154 form a disulfide bridge. The tract at residues 137 to 146 (HTLLAMIGEQ) is EIF4G-binding. Residues 161–166 (RGKQER) and 206–210 (KKMDK) contribute to the mRNA site.

This sequence belongs to the eukaryotic initiation factor 4E family. In terms of assembly, EIF4F is a multi-subunit complex, the composition of which varies with external and internal environmental conditions. It is composed of at least EIF4A, EIF4E and EIF4G. EIF4E is also known to interact with other partners. In higher plants two isoforms of EIF4F have been identified, named isoform EIF4F and isoform EIF(iso)4F. Isoform EIF4F has subunits p220 and p26, whereas isoform EIF(iso)4F has subunits p82 and p28. According to the redox status, the Cys-116-Cys-154 disulfide bridge may have a role in regulating protein function by affecting its ability to bind capped mRNA. In terms of processing, phosphorylated upon oxygen deprivation.

Its subcellular location is the nucleus. The protein resides in the cytoplasm. In terms of biological role, component of the protein complex eIF4F, which is involved in the recognition of the mRNA cap, ATP-dependent unwinding of 5'-terminal secondary structure and recruitment of mRNA to the ribosome. Recognizes and binds the 7-methylguanosine-containing mRNA cap during an early step in the initiation of protein synthesis and facilitates ribosome binding by inducing the unwinding of the mRNAs secondary structures. This chain is Eukaryotic translation initiation factor 4E-1, found in Zea mays (Maize).